Reading from the N-terminus, the 323-residue chain is Transposase for insertion sequence element IS6120 (323 aa).

The interval 300-323 (ERPTDITPPTSPSDGGQHAGTEVA) is disordered. Positions 304–313 (DITPPTSPSD) are enriched in low complexity.

The protein belongs to the transposase mutator family.

Its function is as follows. Required for the transposition of the insertion element. The polypeptide is Transposase for insertion sequence element IS6120 (Mycolicibacterium smegmatis (Mycobacterium smegmatis)).